We begin with the raw amino-acid sequence, 230 residues long: Acyl-protein thioesterase 1 (230 aa).

Catalysis depends on charge relay system residues serine 119, aspartate 174, and histidine 208. The residue at position 224 (lysine 224) is an N6-acetyllysine.

It belongs to the AB hydrolase superfamily. AB hydrolase 2 family. As to quaternary structure, homodimer. Ubiquitous. Detected at low levels in all tissues tested.

It is found in the cytoplasm. The protein localises to the cell membrane. Its subcellular location is the nucleus membrane. It localises to the endoplasmic reticulum. It catalyses the reaction S-hexadecanoyl-L-cysteinyl-[protein] + H2O = L-cysteinyl-[protein] + hexadecanoate + H(+). The enzyme catalyses 1-hexadecanoyl-sn-glycero-3-phosphocholine + H2O = sn-glycerol 3-phosphocholine + hexadecanoate + H(+). It carries out the reaction a 1-(9Z-octadecenoyl)-2-acyl-sn-glycero-3-phosphocholine + H2O = a 2-acyl-sn-glycero-3-phosphocholine + (9Z)-octadecenoate + H(+). In terms of biological role, acts as an acyl-protein thioesterase. Hydrolyzes fatty acids from S-acylated cysteine residues in proteins such as trimeric G alpha proteins or HRAS. Acts as a palmitoyl thioesterase that catalyzes depalmitoylation of proteins, such as ADRB2, KCNMA1 and SQSTM1. Acts as a negative regulator of autophagy by mediating palmitoylation of SQSTM1, decreasing affinity between SQSTM1 and ATG8 proteins and recruitment of ubiquitinated cargo proteins to autophagosomes. Acts as a lysophospholipase and hydrolyzes lysophosphatidylcholine (lyso-PC). Also hydrolyzes lysophosphatidylethanolamine (lyso-PE), lysophosphatidylinositol (lyso-PI) and lysophosphatidylserine (lyso-PS). Has much higher thioesterase activity than lysophospholipase activity. Contributes to the production of lysophosphatidic acid (LPA) during blood coagulation by recognizing and cleaving plasma phospholipids to generate lysophospholipids which in turn act as substrates for ENPP2 to produce LPA. In Rattus norvegicus (Rat), this protein is Acyl-protein thioesterase 1 (Lypla1).